Here is a 206-residue protein sequence, read N- to C-terminus: Small ribosomal subunit protein uS4 (206 aa).

The 61-residue stretch at 96–156 (GRLDNVVYRM…EKAKKQSRVK (61 aa)) folds into the S4 RNA-binding domain.

It belongs to the universal ribosomal protein uS4 family. As to quaternary structure, part of the 30S ribosomal subunit. Contacts protein S5. The interaction surface between S4 and S5 is involved in control of translational fidelity.

One of the primary rRNA binding proteins, it binds directly to 16S rRNA where it nucleates assembly of the body of the 30S subunit. In terms of biological role, with S5 and S12 plays an important role in translational accuracy. This is Small ribosomal subunit protein uS4 from Escherichia fergusonii (strain ATCC 35469 / DSM 13698 / CCUG 18766 / IAM 14443 / JCM 21226 / LMG 7866 / NBRC 102419 / NCTC 12128 / CDC 0568-73).